The following is a 38-amino-acid chain: Large ribosomal subunit protein bL36 (38 aa).

It belongs to the bacterial ribosomal protein bL36 family.

This is Large ribosomal subunit protein bL36 from Paraburkholderia phymatum (strain DSM 17167 / CIP 108236 / LMG 21445 / STM815) (Burkholderia phymatum).